Reading from the N-terminus, the 249-residue chain is Ubiquinone/menaquinone biosynthesis C-methyltransferase UbiE (249 aa).

S-adenosyl-L-methionine contacts are provided by residues T72, D93, and 121 to 122 (DA).

The protein belongs to the class I-like SAM-binding methyltransferase superfamily. MenG/UbiE family.

It carries out the reaction a 2-demethylmenaquinol + S-adenosyl-L-methionine = a menaquinol + S-adenosyl-L-homocysteine + H(+). The enzyme catalyses a 2-methoxy-6-(all-trans-polyprenyl)benzene-1,4-diol + S-adenosyl-L-methionine = a 5-methoxy-2-methyl-3-(all-trans-polyprenyl)benzene-1,4-diol + S-adenosyl-L-homocysteine + H(+). It participates in quinol/quinone metabolism; menaquinone biosynthesis; menaquinol from 1,4-dihydroxy-2-naphthoate: step 2/2. The protein operates within cofactor biosynthesis; ubiquinone biosynthesis. Its function is as follows. Methyltransferase required for the conversion of demethylmenaquinol (DMKH2) to menaquinol (MKH2) and the conversion of 2-polyprenyl-6-methoxy-1,4-benzoquinol (DDMQH2) to 2-polyprenyl-3-methyl-6-methoxy-1,4-benzoquinol (DMQH2). This is Ubiquinone/menaquinone biosynthesis C-methyltransferase UbiE from Teredinibacter turnerae (strain ATCC 39867 / T7901).